Reading from the N-terminus, the 290-residue chain is MQGRIVKSLAGFYYVESDGVVYQTRARGNFRKKGQIPYVGDWVEFSSQDQSEGYILSIEERKNSLVRPPIVNIDQAVVIMSAKEPDFNANLLDRFLVLLEYKMIQPIIYISKLDLLDDLVVIDDIREHYQNIGYVFCYSQEELLPLLADKVTVFMGQTGVGKSTLLNKIAPELKLETGEISDSLGRGRHTTRAVSFYNVHKGKIADTPGFSSLDYEVDNAEDLNESFPELRRLSHFCKFRSCTHTHEPKCAVKEALTQGQLWQVRYDNYLQFLSEIENRRETYKKVIKRK.

The CP-type G domain maps to 62–213; it reads KNSLVRPPIV…IADTPGFSSL (152 aa). GTP is bound by residues 111–114 and 156–164; these read SKLD and GQTGVGKST. The Zn(2+) site is built by Cys237, Cys242, His244, and Cys250.

It belongs to the TRAFAC class YlqF/YawG GTPase family. RsgA subfamily. As to quaternary structure, monomer. Associates with 30S ribosomal subunit, binds 16S rRNA. Requires Zn(2+) as cofactor.

The protein resides in the cytoplasm. One of several proteins that assist in the late maturation steps of the functional core of the 30S ribosomal subunit. Helps release RbfA from mature subunits. May play a role in the assembly of ribosomal proteins into the subunit. Circularly permuted GTPase that catalyzes slow GTP hydrolysis, GTPase activity is stimulated by the 30S ribosomal subunit. The chain is Small ribosomal subunit biogenesis GTPase RsgA from Streptococcus agalactiae serotype III (strain NEM316).